The following is a 217-amino-acid chain: Peptide methionine sulfoxide reductase MsrA (217 aa).

Residues glutamate 16–isoleucine 39 form a disordered region. Cysteine 56 is an active-site residue.

Belongs to the MsrA Met sulfoxide reductase family.

It carries out the reaction L-methionyl-[protein] + [thioredoxin]-disulfide + H2O = L-methionyl-(S)-S-oxide-[protein] + [thioredoxin]-dithiol. The catalysed reaction is [thioredoxin]-disulfide + L-methionine + H2O = L-methionine (S)-S-oxide + [thioredoxin]-dithiol. Its function is as follows. Has an important function as a repair enzyme for proteins that have been inactivated by oxidation. Catalyzes the reversible oxidation-reduction of methionine sulfoxide in proteins to methionine. The polypeptide is Peptide methionine sulfoxide reductase MsrA (Corynebacterium efficiens (strain DSM 44549 / YS-314 / AJ 12310 / JCM 11189 / NBRC 100395)).